A 535-amino-acid chain; its full sequence is MTIDHEVKRRRTFAIISHPDAGKTTLTEKLLLFAGAIHIAGSVKARKASRHATSDWMEIEKQRGISVASSVMQMEYRDCVINLLDTPGHQDFSEDTYRVLTAVDAALMVIDAANGVESQTLRLLQVCRARNTPIITFVNKLDREVREPLDLIDEIERTLGMDVIPFTWPVGSGKRFHGVYDLRHKLMRVFRAGMDRVEQEETAIITNLEDPAISERFGANLEQARQEIELITGAAPEFDQTAFLAGQQTPVFFGSAINNFGVQEVLDTLVELAPPPGSRKAIQREIQPAEKKFSGVVFKIQANMNPAHRDRIAFVRICSGEFRRGMNLKVVRSGKDVRTSTVVSFLSQRRELLETAYAGDIIGIPNHGTLQLADTLTEGDHLQFTGLPFFAPEIFQTVEIADPLRSKQLKLGLAQLGEEGAIQVFRPHIGSMLLLGAVGVLQFEVVTHRLKHEYGVEARIAPAKYQLARWVTAETPQELQRFIDANAHRIAYDAVNAPTFLASFSAEISVAEENWPGIRFHKMREHAGLMFQTAG.

Positions 8–277 (KRRRTFAIIS…TLVELAPPPG (270 aa)) constitute a tr-type G domain. Residues 17 to 24 (SHPDAGKT), 85 to 89 (DTPGH), and 139 to 142 (NKLD) contribute to the GTP site.

The protein belongs to the TRAFAC class translation factor GTPase superfamily. Classic translation factor GTPase family. PrfC subfamily.

The protein localises to the cytoplasm. Its function is as follows. Increases the formation of ribosomal termination complexes and stimulates activities of RF-1 and RF-2. It binds guanine nucleotides and has strong preference for UGA stop codons. It may interact directly with the ribosome. The stimulation of RF-1 and RF-2 is significantly reduced by GTP and GDP, but not by GMP. The chain is Peptide chain release factor 3 from Nitrosomonas europaea (strain ATCC 19718 / CIP 103999 / KCTC 2705 / NBRC 14298).